A 43-amino-acid polypeptide reads, in one-letter code: Photosystem II reaction center protein K (43 aa).

Residues 1–6 (MSLLLA) constitute a propeptide that is removed on maturation. Residues 18–38 (IVDVLPIIPVLFLLLAFVWQA) form a helical membrane-spanning segment.

It belongs to the PsbK family. As to quaternary structure, PSII is composed of 1 copy each of membrane proteins PsbA, PsbB, PsbC, PsbD, PsbE, PsbF, PsbH, PsbI, PsbJ, PsbK, PsbL, PsbM, PsbT, PsbX, PsbY, PsbZ, Psb30/Ycf12, at least 3 peripheral proteins of the oxygen-evolving complex and a large number of cofactors. It forms dimeric complexes.

It localises to the plastid. The protein localises to the chloroplast thylakoid membrane. In terms of biological role, one of the components of the core complex of photosystem II (PSII). PSII is a light-driven water:plastoquinone oxidoreductase that uses light energy to abstract electrons from H(2)O, generating O(2) and a proton gradient subsequently used for ATP formation. It consists of a core antenna complex that captures photons, and an electron transfer chain that converts photonic excitation into a charge separation. In Oltmannsiellopsis viridis (Marine flagellate), this protein is Photosystem II reaction center protein K.